We begin with the raw amino-acid sequence, 125 residues long: MIHGIGTDIVQIERVQRSLDRHGARFAARILAASERDGFAASRDPARFLAKRFAAKEAFGKALGTGVAIPATLHAVAVDHDERGKPLYCYGTALAGFLAERGLSAHLSLTDEVDYVVAFALIEKR.

Mg(2+) contacts are provided by Asp8 and Glu57.

This sequence belongs to the P-Pant transferase superfamily. AcpS family. The cofactor is Mg(2+).

The protein resides in the cytoplasm. The enzyme catalyses apo-[ACP] + CoA = holo-[ACP] + adenosine 3',5'-bisphosphate + H(+). Functionally, transfers the 4'-phosphopantetheine moiety from coenzyme A to a Ser of acyl-carrier-protein. The sequence is that of Holo-[acyl-carrier-protein] synthase from Aromatoleum aromaticum (strain DSM 19018 / LMG 30748 / EbN1) (Azoarcus sp. (strain EbN1)).